Reading from the N-terminus, the 248-residue chain is Probable transcriptional regulatory protein FTL_0929 (248 aa).

It belongs to the TACO1 family.

The protein resides in the cytoplasm. The protein is Probable transcriptional regulatory protein FTL_0929 of Francisella tularensis subsp. holarctica (strain LVS).